The primary structure comprises 346 residues: 3-isopropylmalate dehydrogenase (346 aa).

76–87 (GPKWTDPNNRPE) is an NAD(+) binding site. Substrate contacts are provided by Arg94, Arg104, Arg132, and Asp217. Mg(2+) is bound by residues Asp217, Asp241, and Asp245. 275-287 (GSAPDIANQDIAN) provides a ligand contact to NAD(+).

The protein belongs to the isocitrate and isopropylmalate dehydrogenases family. LeuB type 1 subfamily. Homodimer. It depends on Mg(2+) as a cofactor. Requires Mn(2+) as cofactor.

The protein resides in the cytoplasm. The enzyme catalyses (2R,3S)-3-isopropylmalate + NAD(+) = 4-methyl-2-oxopentanoate + CO2 + NADH. It participates in amino-acid biosynthesis; L-leucine biosynthesis; L-leucine from 3-methyl-2-oxobutanoate: step 3/4. Its function is as follows. Catalyzes the oxidation of 3-carboxy-2-hydroxy-4-methylpentanoate (3-isopropylmalate) to 3-carboxy-4-methyl-2-oxopentanoate. The product decarboxylates to 4-methyl-2 oxopentanoate. This Staphylococcus saprophyticus subsp. saprophyticus (strain ATCC 15305 / DSM 20229 / NCIMB 8711 / NCTC 7292 / S-41) protein is 3-isopropylmalate dehydrogenase.